Reading from the N-terminus, the 149-residue chain is SsrA-binding protein (149 aa).

Belongs to the SmpB family.

The protein resides in the cytoplasm. Required for rescue of stalled ribosomes mediated by trans-translation. Binds to transfer-messenger RNA (tmRNA), required for stable association of tmRNA with ribosomes. tmRNA and SmpB together mimic tRNA shape, replacing the anticodon stem-loop with SmpB. tmRNA is encoded by the ssrA gene; the 2 termini fold to resemble tRNA(Ala) and it encodes a 'tag peptide', a short internal open reading frame. During trans-translation Ala-aminoacylated tmRNA acts like a tRNA, entering the A-site of stalled ribosomes, displacing the stalled mRNA. The ribosome then switches to translate the ORF on the tmRNA; the nascent peptide is terminated with the 'tag peptide' encoded by the tmRNA and targeted for degradation. The ribosome is freed to recommence translation, which seems to be the essential function of trans-translation. The polypeptide is SsrA-binding protein (Wolbachia pipientis wMel).